A 243-amino-acid polypeptide reads, in one-letter code: 3,4-dihydroxyphthalate decarboxylase (243 aa).

Glutamate 86 acts as the Proton donor/acceptor in catalysis. Residues glutamate 86, histidine 105, histidine 107, and histidine 173 each coordinate a divalent metal cation.

This sequence belongs to the aldolase class II family. The cofactor is a divalent metal cation.

It catalyses the reaction 3,4-dihydroxyphthalate + H(+) = 3,4-dihydroxybenzoate + CO2. It functions in the pathway xenobiotic degradation; phthalate degradation. Its function is as follows. Catalyzes the decarboxylation of 3,4-dihydroxyphthalate to protocatechuate (3,4-dihydroxybenzoate) during phthalate metabolism. This chain is 3,4-dihydroxyphthalate decarboxylase, found in Rhodococcus jostii (strain RHA1).